The chain runs to 125 residues: NADPH-dependent 7-cyano-7-deazaguanine reductase (125 aa).

The Thioimide intermediate role is filled by cysteine 41. Catalysis depends on aspartate 48, which acts as the Proton donor. Residues 63 to 65 and 82 to 83 contribute to the substrate site; these read IEL and HE.

It belongs to the GTP cyclohydrolase I family. QueF type 1 subfamily.

The protein localises to the cytoplasm. The enzyme catalyses 7-aminomethyl-7-carbaguanine + 2 NADP(+) = 7-cyano-7-deazaguanine + 2 NADPH + 3 H(+). It participates in tRNA modification; tRNA-queuosine biosynthesis. In terms of biological role, catalyzes the NADPH-dependent reduction of 7-cyano-7-deazaguanine (preQ0) to 7-aminomethyl-7-deazaguanine (preQ1). This Sulfurovum sp. (strain NBC37-1) protein is NADPH-dependent 7-cyano-7-deazaguanine reductase.